Consider the following 375-residue polypeptide: PqqA peptide cyclase (375 aa).

Residues 18-235 (ILPPMAMLAE…EAREKYQGIL (218 aa)) form the Radical SAM core domain. Cysteine 32, cysteine 36, and cysteine 39 together coordinate [4Fe-4S] cluster.

This sequence belongs to the radical SAM superfamily. PqqE family. As to quaternary structure, interacts with PqqD. The interaction is necessary for activity of PqqE. [4Fe-4S] cluster serves as cofactor.

It carries out the reaction [PQQ precursor protein] + S-adenosyl-L-methionine = E-Y cross-linked-[PQQ precursor protein] + 5'-deoxyadenosine + L-methionine + H(+). It functions in the pathway cofactor biosynthesis; pyrroloquinoline quinone biosynthesis. Functionally, catalyzes the cross-linking of a glutamate residue and a tyrosine residue in the PqqA protein as part of the biosynthesis of pyrroloquinoline quinone (PQQ). This chain is PqqA peptide cyclase, found in Rhizobium meliloti (strain 1021) (Ensifer meliloti).